A 907-amino-acid polypeptide reads, in one-letter code: Protein translocase subunit SecA (907 aa).

Residues Gln-87, 105–109, and Asp-506 each bind ATP; that span reads GEGKT. Residues 834–850 show a composition bias toward basic and acidic residues; that stretch reads LEQQREEEAREQAEKMK. The tract at residues 834–907 is disordered; the sequence is LEQQREEEAR…KYKQCHGKIE (74 aa). Residues 864 to 875 show a composition bias toward low complexity; that stretch reads QPQPSQQQGEQP. Zn(2+)-binding residues include Cys-891, Cys-893, Cys-902, and His-903. Residues 897-907 show a composition bias toward basic residues; that stretch reads KKYKQCHGKIE.

It belongs to the SecA family. Monomer and homodimer. Part of the essential Sec protein translocation apparatus which comprises SecA, SecYEG and auxiliary proteins SecDF-YajC and YidC. Zn(2+) is required as a cofactor.

Its subcellular location is the cell inner membrane. It is found in the cytoplasm. The enzyme catalyses ATP + H2O + cellular proteinSide 1 = ADP + phosphate + cellular proteinSide 2.. Functionally, part of the Sec protein translocase complex. Interacts with the SecYEG preprotein conducting channel. Has a central role in coupling the hydrolysis of ATP to the transfer of proteins into and across the cell membrane, serving both as a receptor for the preprotein-SecB complex and as an ATP-driven molecular motor driving the stepwise translocation of polypeptide chains across the membrane. In Alcanivorax borkumensis (strain ATCC 700651 / DSM 11573 / NCIMB 13689 / SK2), this protein is Protein translocase subunit SecA.